The chain runs to 382 residues: Mannitol-1-phosphate 5-dehydrogenase (382 aa).

Residue 4–15 (AVHFGAGNIGRG) participates in NAD(+) binding.

It belongs to the mannitol dehydrogenase family.

The catalysed reaction is D-mannitol 1-phosphate + NAD(+) = beta-D-fructose 6-phosphate + NADH + H(+). The protein is Mannitol-1-phosphate 5-dehydrogenase of Vibrio vulnificus (strain YJ016).